The chain runs to 385 residues: Protein pelota homolog (385 aa).

Residue Lys162 forms a Glycyl lysine isopeptide (Lys-Gly) (interchain with G-Cter in SUMO2) linkage. Phosphoserine is present on residues Ser374, Ser380, Ser381, and Ser382.

It belongs to the eukaryotic release factor 1 family. Pelota subfamily. In terms of assembly, component of the Pelota-HBS1L complex, also named Dom34-Hbs1 complex, composed of PELO and HBS1L. Interacts with PINK1. Interacts with ABCE1. Interacts with CNOT4. A divalent metal cation is required as a cofactor. As to expression, ubiquitously expressed.

It is found in the cytoplasm. Its function is as follows. Component of the Pelota-HBS1L complex, a complex that recognizes stalled ribosomes and triggers the No-Go Decay (NGD) pathway. In the Pelota-HBS1L complex, PELO recognizes ribosomes stalled at the 3' end of an mRNA and engages stalled ribosomes by destabilizing mRNA in the mRNA channel. Following mRNA extraction from stalled ribosomes by the SKI complex, the Pelota-HBS1L complex promotes recruitment of ABCE1, which drives the disassembly of stalled ribosomes, followed by degradation of damaged mRNAs as part of the NGD pathway. As part of the PINK1-regulated signaling, upon mitochondrial damage is recruited to the ribosome/mRNA-ribonucleoprotein complex associated to mitochondrial outer membrane thereby enabling the recruitment of autophagy receptors and induction of mitophagy. This is Protein pelota homolog from Homo sapiens (Human).